A 629-amino-acid chain; its full sequence is G1-specific transcription factors activator MSA1 (629 aa).

Residues 1–11 (MDKSMIKKRGR) show a composition bias toward basic residues. Disordered regions lie at residues 1–60 (MDKS…KRRL), 83–106 (STPT…NDSY), 217–286 (YCDT…SSLQ), 455–485 (VQVQ…NMNS), and 586–629 (PNLH…IDDQ). Polar residues predominate over residues 21–37 (PLQSPMAHSSMQVQKQG). Polar residues predominate over residues 245-260 (IETSASPIGSARNNNI). Composition is skewed to low complexity over residues 261–277 (LLSQ…QLKP) and 455–475 (VQVQ…RQFQ). A Phosphoserine modification is found at serine 268. Positions 614–629 (KQDDARTALKRLIDDQ) are enriched in basic and acidic residues.

Interacts with transcription complexes SCB-binding factor (SBF) and MCB-binding factor (MBF) at their target promoters. Interacts with MBP1 and SWI6. In terms of processing, phosphorylated by CDC28.

In terms of biological role, activator of G1-specific transcription factors, MBF and SBF. Promotes both the timing of G1-specific gene transcription and cell cycle initiation. Associates with SBF- and MBF-regulated target promoters and this binding is maximal during the G1 phase, prior to maximum budding. Affects cell cycle initiation by advancing the timing of transcription of G1-specific genes. Overexpression advances the timing of SBF-dependent transcription and budding. Depletion delays both indicators of cell cycle initiation. In Saccharomyces cerevisiae (strain ATCC 204508 / S288c) (Baker's yeast), this protein is G1-specific transcription factors activator MSA1 (MSA1).